The following is a 421-amino-acid chain: 3-oxoacyl-[acyl-carrier-protein] synthase 2 (421 aa).

The Ketosynthase family 3 (KS3) domain occupies 1–417 (MRRVVITGTG…GTNASLILRR (417 aa)). Residues Cys170, His311, and His347 each act as for beta-ketoacyl synthase activity in the active site.

It belongs to the thiolase-like superfamily. Beta-ketoacyl-ACP synthases family. In terms of assembly, homodimer.

It carries out the reaction a fatty acyl-[ACP] + malonyl-[ACP] + H(+) = a 3-oxoacyl-[ACP] + holo-[ACP] + CO2. The catalysed reaction is (9Z)-hexadecenoyl-[ACP] + malonyl-[ACP] + H(+) = 3-oxo-(11Z)-octadecenoyl-[ACP] + holo-[ACP] + CO2. It participates in lipid metabolism; fatty acid biosynthesis. Functionally, involved in the type II fatty acid elongation cycle. Catalyzes the elongation of a wide range of acyl-ACP by the addition of two carbons from malonyl-ACP to an acyl acceptor. Can efficiently catalyze the conversion of palmitoleoyl-ACP (cis-hexadec-9-enoyl-ACP) to cis-vaccenoyl-ACP (cis-octadec-11-enoyl-ACP), an essential step in the thermal regulation of fatty acid composition. The sequence is that of 3-oxoacyl-[acyl-carrier-protein] synthase 2 (fabF) from Rhizobium meliloti (strain 1021) (Ensifer meliloti).